The following is a 1437-amino-acid chain: DNA polymerase III PolC-type (1437 aa).

One can recognise an Exonuclease domain in the interval 420 to 576 (YVIFDVETTG…YDSETTGHLC (157 aa)).

This sequence belongs to the DNA polymerase type-C family. PolC subfamily.

It is found in the cytoplasm. It catalyses the reaction DNA(n) + a 2'-deoxyribonucleoside 5'-triphosphate = DNA(n+1) + diphosphate. Functionally, required for replicative DNA synthesis. This DNA polymerase also exhibits 3' to 5' exonuclease activity. The sequence is that of DNA polymerase III PolC-type from Pediococcus pentosaceus (strain ATCC 25745 / CCUG 21536 / LMG 10740 / 183-1w).